A 188-amino-acid polypeptide reads, in one-letter code: Ribosome-recycling factor (188 aa).

It belongs to the RRF family.

It is found in the cytoplasm. In terms of biological role, responsible for the release of ribosomes from messenger RNA at the termination of protein biosynthesis. May increase the efficiency of translation by recycling ribosomes from one round of translation to another. The protein is Ribosome-recycling factor of Cereibacter sphaeroides (strain ATCC 17023 / DSM 158 / JCM 6121 / CCUG 31486 / LMG 2827 / NBRC 12203 / NCIMB 8253 / ATH 2.4.1.) (Rhodobacter sphaeroides).